Here is a 515-residue protein sequence, read N- to C-terminus: ATP synthase subunit alpha (515 aa).

An ATP-binding site is contributed by 171–178 (GDRQTGKT).

It belongs to the ATPase alpha/beta chains family. As to quaternary structure, F-type ATPases have 2 components, CF(1) - the catalytic core - and CF(0) - the membrane proton channel. CF(1) has five subunits: alpha(3), beta(3), gamma(1), delta(1), epsilon(1). CF(0) has three main subunits: a(1), b(2) and c(9-12). The alpha and beta chains form an alternating ring which encloses part of the gamma chain. CF(1) is attached to CF(0) by a central stalk formed by the gamma and epsilon chains, while a peripheral stalk is formed by the delta and b chains.

The protein localises to the cell inner membrane. It catalyses the reaction ATP + H2O + 4 H(+)(in) = ADP + phosphate + 5 H(+)(out). Its function is as follows. Produces ATP from ADP in the presence of a proton gradient across the membrane. The alpha chain is a regulatory subunit. The polypeptide is ATP synthase subunit alpha (Xylella fastidiosa (strain Temecula1 / ATCC 700964)).